A 532-amino-acid polypeptide reads, in one-letter code: Phosphoenolpyruvate carboxykinase (ATP) (532 aa).

The substrate site is built by arginine 60, tyrosine 194, and lysine 200. ATP is bound by residues lysine 200, histidine 219, and 237 to 245 (GLSGTGKTT). 2 residues coordinate Mn(2+): lysine 200 and histidine 219. Aspartate 258 contacts Mn(2+). ATP-binding residues include glutamate 286, arginine 324, and threonine 449. Residue arginine 324 participates in substrate binding.

It belongs to the phosphoenolpyruvate carboxykinase (ATP) family. The cofactor is Mn(2+).

Its subcellular location is the cytoplasm. It carries out the reaction oxaloacetate + ATP = phosphoenolpyruvate + ADP + CO2. Its pathway is carbohydrate biosynthesis; gluconeogenesis. Its function is as follows. Involved in the gluconeogenesis. Catalyzes the conversion of oxaloacetate (OAA) to phosphoenolpyruvate (PEP) through direct phosphoryl transfer between the nucleoside triphosphate and OAA. The chain is Phosphoenolpyruvate carboxykinase (ATP) from Roseobacter denitrificans (strain ATCC 33942 / OCh 114) (Erythrobacter sp. (strain OCh 114)).